The chain runs to 82 residues: Bowman-Birk type proteinase inhibitor (82 aa).

Positions 1-24 are disordered; sequence SGHHDETTDEPSESSKPCCDQCSC. 7 disulfides stabilise this stretch: cysteine 18-cysteine 72, cysteine 19-cysteine 34, cysteine 22-cysteine 68, cysteine 24-cysteine 32, cysteine 42-cysteine 49, cysteine 46-cysteine 61, and cysteine 51-cysteine 59.

This sequence belongs to the Bowman-Birk serine protease inhibitor family.

Functionally, trypsin and chymotrypsin are inhibited simultaneously. There are two separate reactive sites for trypsin and chymotrypsin but they do not inhibit simultaneously. This chain is Bowman-Birk type proteinase inhibitor, found in Phaseolus angularis (Azuki bean).